The sequence spans 402 residues: NADH-quinone oxidoreductase subunit D (402 aa).

It belongs to the complex I 49 kDa subunit family. As to quaternary structure, NDH-1 is composed of 14 different subunits. Subunits NuoB, C, D, E, F, and G constitute the peripheral sector of the complex.

It is found in the cell inner membrane. The catalysed reaction is a quinone + NADH + 5 H(+)(in) = a quinol + NAD(+) + 4 H(+)(out). In terms of biological role, NDH-1 shuttles electrons from NADH, via FMN and iron-sulfur (Fe-S) centers, to quinones in the respiratory chain. The immediate electron acceptor for the enzyme in this species is believed to be ubiquinone. Couples the redox reaction to proton translocation (for every two electrons transferred, four hydrogen ions are translocated across the cytoplasmic membrane), and thus conserves the redox energy in a proton gradient. This is NADH-quinone oxidoreductase subunit D from Azorhizobium caulinodans (strain ATCC 43989 / DSM 5975 / JCM 20966 / LMG 6465 / NBRC 14845 / NCIMB 13405 / ORS 571).